The chain runs to 369 residues: Anhydro-N-acetylmuramic acid kinase (369 aa).

12 to 19 (GTSMDGVD) lines the ATP pocket.

This sequence belongs to the anhydro-N-acetylmuramic acid kinase family.

It catalyses the reaction 1,6-anhydro-N-acetyl-beta-muramate + ATP + H2O = N-acetyl-D-muramate 6-phosphate + ADP + H(+). Its pathway is amino-sugar metabolism; 1,6-anhydro-N-acetylmuramate degradation. The protein operates within cell wall biogenesis; peptidoglycan recycling. Functionally, catalyzes the specific phosphorylation of 1,6-anhydro-N-acetylmuramic acid (anhMurNAc) with the simultaneous cleavage of the 1,6-anhydro ring, generating MurNAc-6-P. Is required for the utilization of anhMurNAc either imported from the medium or derived from its own cell wall murein, and thus plays a role in cell wall recycling. This is Anhydro-N-acetylmuramic acid kinase from Shewanella sp. (strain W3-18-1).